A 392-amino-acid chain; its full sequence is MSLPLPPALSELARALPYSRTQWLPIFVGFLIGYPILIRALRYKRHGEMKKKFYFPTRESMAEMTDEEAFLIQKEMAQLEFPFMFLTSGQFALFRTYGIPTISHLLTKTGQFSKPETSFKRYTDTAALIGEMVENSPTSQRAFISVARTRFLHSGYQASGKILDADLLYTLALFAVQPVRFIENFEWRTLSDLELCAIGTFWKSLGDALGISSEILPSGKTGFKDGIQWLEEVDVWSQDYEAKYMVPDPKNRESADQATAMLISNRYEAPTPGWSMVFSTLLAIRKLILRYLSPPRPAALAVSNIAQKPDKDDRYHRMSWDALPFYIRPTFWNRWGPMAWISWLMGHPVPGDLGQKKGPQGDPGNDEGIKDLKDGEMSLPLVWSKYHATTND.

The Lumenal segment spans residues 1-21 (MSLPLPPALSELARALPYSRT). A helical membrane pass occupies residues 22-41 (QWLPIFVGFLIGYPILIRAL). Topologically, residues 42–392 (RYKRHGEMKK…WSKYHATTND (351 aa)) are cytoplasmic. The segment at 352 to 376 (DLGQKKGPQGDPGNDEGIKDLKDGE) is disordered. Residues 367–376 (EGIKDLKDGE) are compositionally biased toward basic and acidic residues.

This sequence belongs to the mpaB oxygenase family.

Its subcellular location is the endoplasmic reticulum membrane. It catalyses the reaction 4-farnesyl-3,5-dihydroxy-6-methylphthalide + AH2 + 2 O2 = (4E,8E)-10-(4,6-dihydroxy-7-methyl-3-oxo-1,3-dihydro-2-benzofuran-5-yl)-4,8-dimethyldeca-4,8-dienoate + acetone + A + H2O + H(+). Its pathway is secondary metabolite biosynthesis; terpenoid biosynthesis. ER-bound oxygenase; part of the gene cluster that mediates the biosynthesis of mycophenolic acid (MPA), the first isolated antibiotic natural product in the world obtained from a culture of Penicillium brevicompactum in 1893. MpaB catalyzes the oxidative cleavage the C19-C20 double bond in farnesyl-DHMP (FDHMP) to yield FDHMP-3C via a mycophenolic aldehyde intermediate. The first step of the pathway is the synthesis of 5-methylorsellinic acid (5MOA) by the cytosolic polyketide synthase mpaC. 5MOA is then converted to the phthalide compound 5,7-dihydroxy-4,6-dimethylphthalide (DHMP) by the endoplasmic reticulum-bound cytochrome P450 monooxygenase mpaDE. MpaDE first catalyzes hydroxylation of 5-MOA to 4,6-dihydroxy-2-(hydroxymethyl)-3-methylbenzoic acid (DHMB). MpaDE then acts as a lactone synthase that catalyzes the ring closure to convert DHMB into DHMP. The next step is the prenylation of DHMP by the Golgi apparatus-associated prenyltransferase mpaA to yield farnesyl-DHMP (FDHMP). The ER-bound oxygenase mpaB then mediates the oxidative cleavage the C19-C20 double bond in FDHMP to yield FDHMP-3C via a mycophenolic aldehyde intermediate. The O-methyltransferase mpaG catalyzes the methylation of FDHMP-3C to yield MFDHMP-3C. After the cytosolic methylation of FDHMP-3C, MFDHMP-3C enters into peroxisomes probably via free diffusion due to its low molecular weight. Upon a peroxisomal CoA ligation reaction, catalyzed by a beta-oxidation component enzyme acyl-CoA ligase ACL891, MFDHMP-3C-CoA would then be restricted to peroxisomes for the following beta-oxidation pathway steps. The peroxisomal beta-oxidation machinery than converts MFDHMP-3C-CoA into MPA_CoA, via a beta-oxidation chain-shortening process. Finally mpaH acts as a peroxisomal acyl-CoA hydrolase with high substrate specificity toward MPA-CoA to release the final product MPA. The chain is ER-bound oxygenase mpaB from Penicillium brevicompactum.